A 117-amino-acid polypeptide reads, in one-letter code: Modulator protein MzrA (117 aa).

Over 1-9 (MNSPGLRKP) the chain is Cytoplasmic. A helical transmembrane segment spans residues 10–29 (TIWRPLLLLFPLLALLLSMS). Residues 30-117 (SPRLPDEVML…THGTIRVARS (88 aa)) are Periplasmic-facing.

It belongs to the MzrA family. Interacts with EnvZ.

It is found in the cell inner membrane. In terms of biological role, modulates the activity of the EnvZ/OmpR two-component regulatory system, probably by directly modulating EnvZ enzymatic activity and increasing stability of phosphorylated OmpR. In Dickeya zeae (strain Ech586) (Dickeya dadantii (strain Ech586)), this protein is Modulator protein MzrA.